An 80-amino-acid polypeptide reads, in one-letter code: Defensin-like protein 207 (80 aa).

A signal peptide spans 1-29; it reads MAKNLNSVSFIVLLLVLLVASTEILKSDA. 3 disulfides stabilise this stretch: Cys-38–Cys-64, Cys-50–Cys-75, and Cys-54–Cys-77.

Belongs to the DEFL family.

Its subcellular location is the secreted. This Arabidopsis thaliana (Mouse-ear cress) protein is Defensin-like protein 207.